The chain runs to 574 residues: Intraflagellar transport protein 56 homolog (574 aa).

TPR repeat units follow at residues 20–52, 57–90, and 151–184; these read AQKMPELDDFLSNQDYEGAISLLNHKLKAGNLD, DSLQLWLAHCYYRLRNYEEAANVYTFLMNKDDAP, and LEDRLSLAGVNYSRMHYQDAIEVYTSVLQTSPNL.

It belongs to the IFT56 family. As to quaternary structure, component of the IFT complex B composed of at least che-2, che-13, dyf-1, dyf-3, dyf-6, dyf-11, dyf-13, ift-20, ift-74, ift-81, ifta-2, osm-1, osm-5 and osm-6.

It is found in the cell projection. The protein localises to the cilium. Its function is as follows. Component of the intraflagellar transport (IFT) complex B required for transport of proteins in the motile cilium. May be required for ciliary entrance and transport of specific ciliary cargo proteins such as che-3 which are related to motility. The sequence is that of Intraflagellar transport protein 56 homolog from Caenorhabditis elegans.